A 597-amino-acid polypeptide reads, in one-letter code: Proteasome-associated ATPase (597 aa).

Over residues 1 to 12 (MQHDRPGSRPEE) the composition is skewed to basic and acidic residues. The tract at residues 1–22 (MQHDRPGSRPEEGGEQQIGGDA) is disordered. The stretch at 21–97 (DAELNSQIRL…REEVDRLAQP (77 aa)) forms a coiled coil. 284–289 (GCGKTL) is an ATP binding site. The docks into pockets in the proteasome alpha-ring stretch occupies residues 596-597 (YL).

This sequence belongs to the AAA ATPase family. In terms of assembly, homohexamer. Assembles into a hexameric ring structure that caps the 20S proteasome core. Strongly interacts with the prokaryotic ubiquitin-like protein Pup through a hydrophobic interface; the interacting region of ARC lies in its N-terminal coiled-coil domain. There is one Pup binding site per ARC hexamer ring. Upon ATP-binding, the C-terminus of ARC interacts with the alpha-rings of the proteasome core, possibly by binding to the intersubunit pockets.

The protein operates within protein degradation; proteasomal Pup-dependent pathway. Functionally, ATPase which is responsible for recognizing, binding, unfolding and translocation of pupylated proteins into the bacterial 20S proteasome core particle. May be essential for opening the gate of the 20S proteasome via an interaction with its C-terminus, thereby allowing substrate entry and access to the site of proteolysis. Thus, the C-termini of the proteasomal ATPase may function like a 'key in a lock' to induce gate opening and therefore regulate proteolysis. The polypeptide is Proteasome-associated ATPase (Saccharopolyspora erythraea (strain ATCC 11635 / DSM 40517 / JCM 4748 / NBRC 13426 / NCIMB 8594 / NRRL 2338)).